We begin with the raw amino-acid sequence, 201 residues long: uncharacterized protein (201 aa).

4 helical membrane-spanning segments follow: residues 9–29 (YNVFLANLVLVFGFALNILVA), 42–62 (FLFVTPFLGVVIGAVLYFFDV), 86–106 (SGVIVFFLNVLIGVVLLVVMV), and 126–146 (LPYLWSTTGTSIVLSLISIGM). Basic and acidic residues-rich tracts occupy residues 165–174 (EPTDPNKTDN) and 182–191 (DENKKNEKEQ). Residues 165-201 (EPTDPNKTDNRAVVINLDENKKNEKEQSPPSAEMTSL) form a disordered region. Positions 192 to 201 (SPPSAEMTSL) are enriched in polar residues.

The protein localises to the cell membrane. This is an uncharacterized protein from Mycoplasma genitalium (strain ATCC 33530 / DSM 19775 / NCTC 10195 / G37) (Mycoplasmoides genitalium).